We begin with the raw amino-acid sequence, 340 residues long: Ferrochelatase (340 aa).

Fe cation is bound by residues histidine 189 and glutamate 292.

The protein belongs to the ferrochelatase family.

It is found in the cytoplasm. It catalyses the reaction heme b + 2 H(+) = protoporphyrin IX + Fe(2+). The protein operates within porphyrin-containing compound metabolism; protoheme biosynthesis; protoheme from protoporphyrin-IX: step 1/1. Functionally, catalyzes the ferrous insertion into protoporphyrin IX. This Pseudomonas syringae pv. syringae (strain B728a) protein is Ferrochelatase.